Here is a 574-residue protein sequence, read N- to C-terminus: Phosphoenolpyruvate-protein phosphotransferase (574 aa).

His190 functions as the Tele-phosphohistidine intermediate in the catalytic mechanism. Positions 297 and 333 each coordinate phosphoenolpyruvate. Mg(2+) contacts are provided by Glu432 and Asp456. Residues Asn455–Asp456 and Arg466 each bind phosphoenolpyruvate. Residue Cys503 is the Proton donor of the active site.

The protein belongs to the PEP-utilizing enzyme family. Homodimer. The cofactor is Mg(2+).

Its subcellular location is the cytoplasm. It carries out the reaction L-histidyl-[protein] + phosphoenolpyruvate = N(pros)-phospho-L-histidyl-[protein] + pyruvate. In terms of biological role, general (non sugar-specific) component of the phosphoenolpyruvate-dependent sugar phosphotransferase system (sugar PTS). This major carbohydrate active-transport system catalyzes the phosphorylation of incoming sugar substrates concomitantly with their translocation across the cell membrane. Enzyme I transfers the phosphoryl group from phosphoenolpyruvate (PEP) to the phosphoryl carrier protein (HPr). This is Phosphoenolpyruvate-protein phosphotransferase (ptsI) from Latilactobacillus sakei (Lactobacillus sakei).